We begin with the raw amino-acid sequence, 270 residues long: MDNKIVYVVSDSVGETADLVVRAAMGQFPFAPDIRRVPYVEDTGTLKEVISIAKSNQALICFTLVKPDMRQYLVTEAAKEGVEAYDIIGPLIDQIEEITGRVPRYEPGVVRRLDEEYFKKIEAIEFAVKYDDGRDARGILKADIVLIGISRTSKTPLSQYLAHNKRLKVANVPLVPEVDPPEELYQVAKEKCFGLKITPEKLNHIRKERLKSLGLSDGATYANINRIKEEIDHFENVVSKINCQVIDVSNKAIEETANIIVNAVQNQKMF.

148-155 (GISRTSKT) is an ADP binding site.

This sequence belongs to the pyruvate, phosphate/water dikinase regulatory protein family. PDRP subfamily.

The enzyme catalyses N(tele)-phospho-L-histidyl/L-threonyl-[pyruvate, phosphate dikinase] + ADP = N(tele)-phospho-L-histidyl/O-phospho-L-threonyl-[pyruvate, phosphate dikinase] + AMP + H(+). The catalysed reaction is N(tele)-phospho-L-histidyl/O-phospho-L-threonyl-[pyruvate, phosphate dikinase] + phosphate + H(+) = N(tele)-phospho-L-histidyl/L-threonyl-[pyruvate, phosphate dikinase] + diphosphate. Bifunctional serine/threonine kinase and phosphorylase involved in the regulation of the pyruvate, phosphate dikinase (PPDK) by catalyzing its phosphorylation/dephosphorylation. In Bacillus cereus (strain 03BB102), this protein is Putative pyruvate, phosphate dikinase regulatory protein.